The following is a 297-amino-acid chain: T-cell leukemia homeobox protein 3 (297 aa).

Residues 1 to 68 (MEPAAGAQGP…LGGPRGGAPY (68 aa)) form a disordered region. The span at 32–52 (APPPPPPPPPPPPPPPPPPRG) shows a compositional bias: pro residues. Positions 172–231 (RKKPRTSFSRVQICELEKRFHRQKYLASAERAALAKSLKMTDAQVKTWFQNRRTKWRRQT) form a DNA-binding region, homeobox.

Expression is restricted to neurons in the peripheral and central nervous system.

Its subcellular location is the nucleus. Functionally, seems to be involved in the development of cranial sensory innervation from peripheral ganglia. The sequence is that of T-cell leukemia homeobox protein 3 (TLX3) from Gallus gallus (Chicken).